We begin with the raw amino-acid sequence, 371 residues long: Zinc transporter ZIP13 (371 aa).

The Lumenal portion of the chain corresponds to 1 to 7 (MPGCPCP). The chain crosses the membrane as a helical span at residues 8-28 (GCGMAGPRLLFLTALALELLE). At 29-68 (RAGGSQPALRSRGTATACRLDNKESESWGALLSGERLDTW) the chain is on the cytoplasmic side. The chain crosses the membrane as a helical span at residues 69-89 (ICSLLGSLMVGLSGVFPLLVI). Residues 90 to 108 (PLEMGTMLRSEAGAWRLKQ) lie on the Lumenal side of the membrane. A helical membrane pass occupies residues 109–129 (LLSFALGGLLGNVFLHLLPEA). Residues 130–149 (WAYTCSASPGGEGQSLQQQQ) are Cytoplasmic-facing. A helical transmembrane segment spans residues 150 to 170 (QLGLWVIAGILTFLALEKMFL). Over 171–235 (DSKEEGTSQA…TIDNFTHGLA (65 aa)) the chain is Lumenal. The chain crosses the membrane as a helical span at residues 236–256 (VAASFLVSKKIGLLTTMAILL). The short motif at 257–262 (HEIPHE) is the XEXPHE-motif element. Topologically, residues 257-278 (HEIPHEVGDFAILLRAGFDRWS) are cytoplasmic. The chain crosses the membrane as a helical span at residues 279-299 (AAKLQLSTALGGLLGAGFAIC). The Lumenal portion of the chain corresponds to 300–316 (TQSPKGVVGCSPAAEET). A helical membrane pass occupies residues 317–337 (AAWVLPFTSGGFLYIALVNVL). At 338–349 (PDLLEEEDPWRS) the chain is on the cytoplasmic side. The chain crosses the membrane as a helical span at residues 350–370 (LQQLLLLCAGIVVMVLFSLFV). Position 371 (aspartate 371) is a topological domain, lumenal.

It belongs to the ZIP transporter (TC 2.A.5) family. Homodimer.

The protein localises to the golgi apparatus membrane. It is found in the cytoplasmic vesicle membrane. The protein resides in the endoplasmic reticulum membrane. The enzyme catalyses Zn(2+)(in) = Zn(2+)(out). In terms of biological role, functions as a zinc transporter transporting Zn(2+) from the Golgi apparatus to the cytosol and thus influences the zinc level at least in areas of the cytosol. May regulate beige adipocyte differentiation. The chain is Zinc transporter ZIP13 from Homo sapiens (Human).